A 334-amino-acid chain; its full sequence is Porphobilinogen deaminase (334 aa).

S-(dipyrrolylmethanemethyl)cysteine is present on Cys258.

This sequence belongs to the HMBS family. In terms of assembly, monomer. Requires dipyrromethane as cofactor.

The catalysed reaction is 4 porphobilinogen + H2O = hydroxymethylbilane + 4 NH4(+). It functions in the pathway porphyrin-containing compound metabolism; protoporphyrin-IX biosynthesis; coproporphyrinogen-III from 5-aminolevulinate: step 2/4. Functionally, tetrapolymerization of the monopyrrole PBG into the hydroxymethylbilane pre-uroporphyrinogen in several discrete steps. This chain is Porphobilinogen deaminase, found in Ralstonia nicotianae (strain ATCC BAA-1114 / GMI1000) (Ralstonia solanacearum).